We begin with the raw amino-acid sequence, 86 residues long: Large ribosomal subunit protein bL27 (86 aa).

The segment covering 1–11 has biased composition (gly residues); the sequence is MATKKAGGGSR. The interval 1-24 is disordered; it reads MATKKAGGGSRNGRDSAGRRLGVK.

This sequence belongs to the bacterial ribosomal protein bL27 family.

The polypeptide is Large ribosomal subunit protein bL27 (Rickettsia africae (strain ESF-5)).